A 415-amino-acid polypeptide reads, in one-letter code: 4-hydroxy-3-methylbut-2-enyl diphosphate reductase (415 aa).

A [4Fe-4S] cluster-binding site is contributed by cysteine 66. Histidine 96 contacts (2E)-4-hydroxy-3-methylbut-2-enyl diphosphate. Residue histidine 96 participates in dimethylallyl diphosphate binding. Residue histidine 96 participates in isopentenyl diphosphate binding. Cysteine 158 contributes to the [4Fe-4S] cluster binding site. Histidine 186 is a binding site for (2E)-4-hydroxy-3-methylbut-2-enyl diphosphate. Histidine 186 contacts dimethylallyl diphosphate. Histidine 186 contributes to the isopentenyl diphosphate binding site. Glutamate 188 serves as the catalytic Proton donor. (2E)-4-hydroxy-3-methylbut-2-enyl diphosphate is bound at residue threonine 259. Cysteine 297 is a [4Fe-4S] cluster binding site. (2E)-4-hydroxy-3-methylbut-2-enyl diphosphate contacts are provided by serine 326, serine 327, asparagine 328, and serine 388. Serine 326, serine 327, asparagine 328, and serine 388 together coordinate dimethylallyl diphosphate. Residues serine 326, serine 327, asparagine 328, and serine 388 each contribute to the isopentenyl diphosphate site.

The protein belongs to the IspH family. [4Fe-4S] cluster is required as a cofactor.

It carries out the reaction isopentenyl diphosphate + 2 oxidized [2Fe-2S]-[ferredoxin] + H2O = (2E)-4-hydroxy-3-methylbut-2-enyl diphosphate + 2 reduced [2Fe-2S]-[ferredoxin] + 2 H(+). The enzyme catalyses dimethylallyl diphosphate + 2 oxidized [2Fe-2S]-[ferredoxin] + H2O = (2E)-4-hydroxy-3-methylbut-2-enyl diphosphate + 2 reduced [2Fe-2S]-[ferredoxin] + 2 H(+). It participates in isoprenoid biosynthesis; dimethylallyl diphosphate biosynthesis; dimethylallyl diphosphate from (2E)-4-hydroxy-3-methylbutenyl diphosphate: step 1/1. It functions in the pathway isoprenoid biosynthesis; isopentenyl diphosphate biosynthesis via DXP pathway; isopentenyl diphosphate from 1-deoxy-D-xylulose 5-phosphate: step 6/6. Its function is as follows. Catalyzes the conversion of 1-hydroxy-2-methyl-2-(E)-butenyl 4-diphosphate (HMBPP) into a mixture of isopentenyl diphosphate (IPP) and dimethylallyl diphosphate (DMAPP). Acts in the terminal step of the DOXP/MEP pathway for isoprenoid precursor biosynthesis. This chain is 4-hydroxy-3-methylbut-2-enyl diphosphate reductase, found in Acaryochloris marina (strain MBIC 11017).